Reading from the N-terminus, the 208-residue chain is Protein GrpE (208 aa).

Residues 1–62 (MTEKDESVKS…ETAVDPKDEE (62 aa)) are disordered. Positions 46-55 (SNEESSEETA) are enriched in acidic residues.

Belongs to the GrpE family. Homodimer.

Its subcellular location is the cytoplasm. Its function is as follows. Participates actively in the response to hyperosmotic and heat shock by preventing the aggregation of stress-denatured proteins, in association with DnaK and GrpE. It is the nucleotide exchange factor for DnaK and may function as a thermosensor. Unfolded proteins bind initially to DnaJ; upon interaction with the DnaJ-bound protein, DnaK hydrolyzes its bound ATP, resulting in the formation of a stable complex. GrpE releases ADP from DnaK; ATP binding to DnaK triggers the release of the substrate protein, thus completing the reaction cycle. Several rounds of ATP-dependent interactions between DnaJ, DnaK and GrpE are required for fully efficient folding. This is Protein GrpE from Staphylococcus haemolyticus (strain JCSC1435).